A 327-amino-acid polypeptide reads, in one-letter code: DNA-directed RNA polymerase subunit alpha (327 aa).

The interval 1–227 (MLIAHRPTLI…ELFGLARELN (227 aa)) is alpha N-terminal domain (alpha-NTD). An alpha C-terminal domain (alpha-CTD) region spans residues 244–327 (SDEDLRIPIE…GSYFDPNYGS (84 aa)).

The protein belongs to the RNA polymerase alpha chain family. In terms of assembly, homodimer. The RNAP catalytic core consists of 2 alpha, 1 beta, 1 beta' and 1 omega subunit. When a sigma factor is associated with the core the holoenzyme is formed, which can initiate transcription.

It catalyses the reaction RNA(n) + a ribonucleoside 5'-triphosphate = RNA(n+1) + diphosphate. Functionally, DNA-dependent RNA polymerase catalyzes the transcription of DNA into RNA using the four ribonucleoside triphosphates as substrates. This Tropheryma whipplei (strain TW08/27) (Whipple's bacillus) protein is DNA-directed RNA polymerase subunit alpha.